A 689-amino-acid chain; its full sequence is MTTQNFLAEIGTEELPPKALKKLATAFAENVENELNQADLSFEKVEWFAAPRRLAVKALGLATAQPSKEIEKRGPAVSAAFDADGKPTKAAEGWARGCGITVDQADRIATDKGEWLVHRAVIEGQPTKNLLVDIISRSLANLPIPKMMRWGDKTEQFVRPVHTVTLFFGSELIEGEILGVKINNVIRGHRFLGEREFTISHADEYLTALREKGMVVADFNERKALILAKSQEKATALGGVADIEEDLLDEVTSLVEFPNVLTAKFEERFLAVPAEALVYTMKGDQKYFPIYDKDGKLLPHFIFVSNINPEDPTAIIEGNEKVVRPRLTDAEFFFKTDLKQRLEDRLPRLETVLFQQQLGTLRDKTARIEALAGEIAAQIGADKAKAERAGLLSKCDLMTNMVFEFTDTQGVMGMHYARHDGEDEEVAVALNEQYMPRFAGDELPKSLVACSVALADKFDTLTGIFGIGQAPKGSADPFALRRAALGSLRIIVEKNLPLDLEDLVRKSAALFGNKLTNANVVEDVVDFMLGRFRAWYQDEGIAVDVIQAVLARRPTKPADFDARVRAVSHFRTLDSAEALAAANKRVSNILAKVEGEISIEIDRTLLVEAEEKALAEQVISLQTELAPTFANGEYQTALDRLASLRETVDNFFEKVMVNAEDANLRRNRQAILNNLRNLFLQVADISVLQ.

The protein belongs to the class-II aminoacyl-tRNA synthetase family. As to quaternary structure, tetramer of two alpha and two beta subunits.

The protein localises to the cytoplasm. The catalysed reaction is tRNA(Gly) + glycine + ATP = glycyl-tRNA(Gly) + AMP + diphosphate. In Actinobacillus pleuropneumoniae serotype 5b (strain L20), this protein is Glycine--tRNA ligase beta subunit.